The following is a 303-amino-acid chain: NAC domain-containing protein 48 (303 aa).

One can recognise an NAC domain in the interval 9-159; it reads LPPGFRFHPT…DWVLCRIYNK (151 aa).

Interacts with NAC071. Widely expressed.

It is found in the nucleus. Functionally, transcription activator that binds to the promoter of the stress response gene LEA19. Involved in tolerance to abiotic stresses. Transcription activator involved in response to abiotic and biotic stresses. Involved in drought and salt stress responses, and defense response to the rice blast fungus. Transcription activator involved tolerance to cold and salt stresses. Transcription activator involved in tolerance to drought stress. Targets directly and activates genes involved in membrane modification, nicotianamine (NA) biosynthesis, glutathione relocation, accumulation of phosphoadenosine phosphosulfate and glycosylation in roots. Controls root growth at early vegetative stage through chromatin modification and histone lysine deacytaltion by HDAC1. This is NAC domain-containing protein 48 from Oryza sativa subsp. japonica (Rice).